Here is a 620-residue protein sequence, read N- to C-terminus: MTLDISKYPHLALANTPDELRLLPVESLPEVCDELRTYLLNSVSQSSGHFASGLGAVELTVALHHVYNTPFDHLIWDVGHQAYPHKILTGRRDQMSTIRQKDGIHPFPWRGESEYDVLSVGHSSTSISAGLGMAIAANKEGLGRKVVSVIGDGAITAGMAFEAMNHAGDVHSDMLVILNDNEMSISENVGALNNHLARLLSGSLYTTIREGGKKVLAGAPPIKELVKRAEEHIKGMVVPGTMFEELGFNYIGPVDGHDVTELVKTLKNMRNLKGPQFLHIMTKKGKGYAPAEADPINYHAVPKFDLSQNPLPKAANAKPTFSKIFGDWLCDMAAEDEKLMAITPAMREGSGMVRFSKEYPSQYFDVAIAEQHAVTLASGMAIGGYNPIVAIYSTFLQRGYDQLIHDVAIMELPVMFAIDRGGLVGADGQTHQGAFDLSFMRCIPNIVIMAPSDENECRQMLYTGHKHQGPSAVRYPRGNGLGAEIQKEMTALEIGKGIIRRQGEKIAILNFGTMLEYALEAAEKLNATVADMRFVKPLDEELILELAANHDVLVTVEENAIAGGAGSGVIEFMMKSKCLKPVLNIGLPDRFVEQGTQQELHTALEIDAAGIEKKIRDYIA.

Residues H80 and 121 to 123 each bind thiamine diphosphate; that span reads GHS. D152 contacts Mg(2+). Residues 153 to 154, N181, Y288, and E370 contribute to the thiamine diphosphate site; that span reads GA. A Mg(2+)-binding site is contributed by N181.

Belongs to the transketolase family. DXPS subfamily. Homodimer. Requires Mg(2+) as cofactor. The cofactor is thiamine diphosphate.

The enzyme catalyses D-glyceraldehyde 3-phosphate + pyruvate + H(+) = 1-deoxy-D-xylulose 5-phosphate + CO2. It functions in the pathway metabolic intermediate biosynthesis; 1-deoxy-D-xylulose 5-phosphate biosynthesis; 1-deoxy-D-xylulose 5-phosphate from D-glyceraldehyde 3-phosphate and pyruvate: step 1/1. Its function is as follows. Catalyzes the acyloin condensation reaction between C atoms 2 and 3 of pyruvate and glyceraldehyde 3-phosphate to yield 1-deoxy-D-xylulose-5-phosphate (DXP). The protein is 1-deoxy-D-xylulose-5-phosphate synthase of Photobacterium profundum (strain SS9).